Here is a 324-residue protein sequence, read N- to C-terminus: Beta-ketoacyl-[acyl-carrier-protein] synthase III (324 aa).

Active-site residues include C113 and H251. Residues 252–256 are ACP-binding; it reads QANKR. Residue N281 is part of the active site.

The protein belongs to the thiolase-like superfamily. FabH family. Homodimer.

The protein resides in the cytoplasm. The enzyme catalyses malonyl-[ACP] + acetyl-CoA + H(+) = 3-oxobutanoyl-[ACP] + CO2 + CoA. It participates in lipid metabolism; fatty acid biosynthesis. Catalyzes the condensation reaction of fatty acid synthesis by the addition to an acyl acceptor of two carbons from malonyl-ACP. Catalyzes the first condensation reaction which initiates fatty acid synthesis and may therefore play a role in governing the total rate of fatty acid production. Possesses both acetoacetyl-ACP synthase and acetyl transacylase activities. Its substrate specificity determines the biosynthesis of branched-chain and/or straight-chain of fatty acids. The chain is Beta-ketoacyl-[acyl-carrier-protein] synthase III from Bartonella henselae (strain ATCC 49882 / DSM 28221 / CCUG 30454 / Houston 1) (Rochalimaea henselae).